Consider the following 386-residue polypeptide: Adiponectin receptor protein 2 (386 aa).

The interval 1 to 71 (MNEPTENRLG…HEYSDEAPQE (71 aa)) is disordered. The Cytoplasmic segment spans residues 1–147 (MNEPTENRLG…SIFRIHTETG (147 aa)). The segment covering 15-41 (PEPDIRLRKGHQLDGTRRGDNDSHQGD) has biased composition (basic and acidic residues). A helical transmembrane segment spans residues 148-168 (NIWTHLLGCVFFLCLGIFYMF). The Extracellular segment spans residues 169 to 181 (RPNISFVAPLQEK). The chain crosses the membrane as a helical span at residues 182–202 (VVFGLFFLGAILCLSFSWLFH). Residue His-202 participates in Zn(2+) binding. The Cytoplasmic segment spans residues 203–213 (TVYCHSEGVSR). A helical membrane pass occupies residues 214-234 (LFSKLDYSGIALLIMGSFVPW). Over 235-245 (LYYSFYCNPQP) the chain is Extracellular. A helical membrane pass occupies residues 246–266 (CFIYLIVICVLGIAAIIVSQW). Over 267-273 (DMFATPQ) the chain is Cytoplasmic. A helical transmembrane segment spans residues 274 to 294 (YRGVRAGVFLGLGLSGIIPTL). Residues 295 to 309 (HYVISEGFLKAATIG) are Extracellular-facing. Residues 310-330 (QIGWLMLMASLYITGAALYAA) form a helical membrane-spanning segment. Residues 331–348 (RIPERFFPGKCDIWFHSH) are Cytoplasmic-facing. Residues His-348 and His-352 each contribute to the Zn(2+) site. Residues 349–369 (QLFHIFVVAGAFVHFHGVSNL) form a helical membrane-spanning segment. Residues 370–386 (QEFRFMIGGGCSEEDAL) lie on the Extracellular side of the membrane.

It belongs to the ADIPOR family. In terms of assembly, may form homooligomers and heterooligomers with ADIPOR1. Interacts with APPL2 (via BAR domain); ADIPOQ dissociates this interaction. In terms of tissue distribution, ubiquitous. Highly expressed in skeletal muscle, liver and placenta. Weakly expressed in brain, heart, colon, spleen, kidney, thymus, small intestine, peripheral blood leukocytes and lung.

It localises to the cell membrane. Receptor for ADIPOQ, an essential hormone secreted by adipocytes that regulates glucose and lipid metabolism. Required for normal body fat and glucose homeostasis. ADIPOQ-binding activates a signaling cascade that leads to increased PPARA activity, and ultimately to increased fatty acid oxidation and glucose uptake. Has intermediate affinity for globular and full-length adiponectin. Required for normal revascularization after chronic ischemia caused by severing of blood vessels. This is Adiponectin receptor protein 2 from Homo sapiens (Human).